A 236-amino-acid chain; its full sequence is MCYSANGNTFLIVDNTQKRIPEEKKPDFVRENVGDLDGVIFVELVDGKYFMDYYNRDGSMAAFCGNGARAFSQYLIDRGWIKEKEFTFLSRAGEIKVIVDDSIWVRMPGVSEKKEMKVDGYEGYFVVVGVPHFVMEVKGIDELDVEKLGRDLRYKTGANVDFYEVLPDRLKVRTYERGVERETKACGTGVTSVFVVYRDKTGAKEVKIQVPGGTLFLKEENGEIFLRGDVKRCSEE.

Substrate-binding residues include Asn-8 and Asn-55. Residue Cys-64 is the Proton donor of the active site. Residues 65-66 (GN), Asn-159, and 176-177 (ER) contribute to the substrate site. The active-site Proton acceptor is the Cys-186. 187-188 (GT) is a substrate binding site.

It belongs to the diaminopimelate epimerase family. In terms of assembly, probably forms homotrimers.

Its subcellular location is the cytoplasm. It carries out the reaction (2S,6S)-2,6-diaminopimelate = meso-2,6-diaminopimelate. The protein operates within amino-acid biosynthesis; L-lysine biosynthesis via DAP pathway; DL-2,6-diaminopimelate from LL-2,6-diaminopimelate: step 1/1. Functionally, catalyzes the stereoinversion of LL-2,6-diaminopimelate (L,L-DAP) to meso-diaminopimelate (meso-DAP), a precursor of L-lysine and an essential component of the bacterial peptidoglycan. Also catalyzes the racemization of certain amino acids, including Lys, with low efficiency. The polypeptide is Diaminopimelate epimerase (Thermotoga maritima (strain ATCC 43589 / DSM 3109 / JCM 10099 / NBRC 100826 / MSB8)).